Consider the following 440-residue polypeptide: V-type ATP synthase beta chain (440 aa).

Belongs to the ATPase alpha/beta chains family.

Functionally, produces ATP from ADP in the presence of a proton gradient across the membrane. The V-type beta chain is a regulatory subunit. This is V-type ATP synthase beta chain from Geotalea uraniireducens (strain Rf4) (Geobacter uraniireducens).